Reading from the N-terminus, the 180-residue chain is Ribulose bisphosphate carboxylase small subunit, chloroplastic 3 (180 aa).

The transit peptide at 1 to 56 (MASMISSSAVTTVSRASTVQSAAVAPFGGLKSMTGFPVKKVNTDITSITSNGGRVK) directs the protein to the chloroplast.

The protein belongs to the RuBisCO small chain family. Heterohexadecamer of 8 large and 8 small subunits.

Its subcellular location is the plastid. It localises to the chloroplast. In terms of biological role, ruBisCO catalyzes two reactions: the carboxylation of D-ribulose 1,5-bisphosphate, the primary event in carbon dioxide fixation, as well as the oxidative fragmentation of the pentose substrate. Both reactions occur simultaneously and in competition at the same active site. Although the small subunit is not catalytic it is essential for maximal activity. Binds to abscisic acid (ABA); only half of the possible binding sites are occupied in the crystal; and there are indications this is a low affinity site. The protein is Ribulose bisphosphate carboxylase small subunit, chloroplastic 3 (RBCS.3A) of Pisum sativum (Garden pea).